The sequence spans 396 residues: Elongation factor Tu (396 aa).

In terms of domain architecture, tr-type G spans 10–206; that stretch reads KPHVNVGTIG…ALDTYIPTPE (197 aa). Residues 19–26 are G1; the sequence is GHVDHGKT. 19 to 26 contacts GTP; it reads GHVDHGKT. A Mg(2+)-binding site is contributed by threonine 26. The segment at 60–64 is G2; that stretch reads GITIN. Residues 81 to 84 are G3; sequence DCPG. GTP-binding positions include 81 to 85 and 136 to 139; these read DCPGH and NKCD. The tract at residues 136-139 is G4; sequence NKCD. Residues 174 to 176 form a G5 region; that stretch reads SAK.

It belongs to the TRAFAC class translation factor GTPase superfamily. Classic translation factor GTPase family. EF-Tu/EF-1A subfamily. As to quaternary structure, monomer.

It is found in the cytoplasm. The catalysed reaction is GTP + H2O = GDP + phosphate + H(+). Its function is as follows. GTP hydrolase that promotes the GTP-dependent binding of aminoacyl-tRNA to the A-site of ribosomes during protein biosynthesis. The protein is Elongation factor Tu of Paraburkholderia xenovorans (strain LB400).